We begin with the raw amino-acid sequence, 82 residues long: ATP synthase subunit c (82 aa).

The next 2 helical transmembrane spans lie at 3-23 (PLVASASVLAAALAIGLASLG) and 57-77 (LAFMESLTIYGLVIALVLLFA).

This sequence belongs to the ATPase C chain family. As to quaternary structure, F-type ATPases have 2 components, F(1) - the catalytic core - and F(0) - the membrane proton channel. F(1) has five subunits: alpha(3), beta(3), gamma(1), delta(1), epsilon(1). F(0) has four main subunits: a(1), b(1), b'(1) and c(10-14). The alpha and beta chains form an alternating ring which encloses part of the gamma chain. F(1) is attached to F(0) by a central stalk formed by the gamma and epsilon chains, while a peripheral stalk is formed by the delta, b and b' chains.

It is found in the cellular thylakoid membrane. Functionally, f(1)F(0) ATP synthase produces ATP from ADP in the presence of a proton or sodium gradient. F-type ATPases consist of two structural domains, F(1) containing the extramembraneous catalytic core and F(0) containing the membrane proton channel, linked together by a central stalk and a peripheral stalk. During catalysis, ATP synthesis in the catalytic domain of F(1) is coupled via a rotary mechanism of the central stalk subunits to proton translocation. Its function is as follows. Key component of the F(0) channel; it plays a direct role in translocation across the membrane. A homomeric c-ring of between 10-14 subunits forms the central stalk rotor element with the F(1) delta and epsilon subunits. In Synechococcus sp. (strain PCC 6716), this protein is ATP synthase subunit c.